We begin with the raw amino-acid sequence, 154 residues long: Endoribonuclease YbeY (154 aa).

Positions 114, 118, and 124 each coordinate Zn(2+).

Belongs to the endoribonuclease YbeY family. Zn(2+) is required as a cofactor.

The protein localises to the cytoplasm. Its function is as follows. Single strand-specific metallo-endoribonuclease involved in late-stage 70S ribosome quality control and in maturation of the 3' terminus of the 16S rRNA. The sequence is that of Endoribonuclease YbeY from Marinomonas sp. (strain MWYL1).